The following is a 287-amino-acid chain: 3-methyl-2-oxobutanoate hydroxymethyltransferase (287 aa).

Mg(2+)-binding residues include aspartate 57 and aspartate 96. 3-methyl-2-oxobutanoate contacts are provided by residues aspartate 57–serine 58, aspartate 96, and lysine 125. Glutamate 127 provides a ligand contact to Mg(2+). The Proton acceptor role is filled by glutamate 194.

This sequence belongs to the PanB family. Homodecamer; pentamer of dimers. Requires Mg(2+) as cofactor.

The protein resides in the cytoplasm. It catalyses the reaction 3-methyl-2-oxobutanoate + (6R)-5,10-methylene-5,6,7,8-tetrahydrofolate + H2O = 2-dehydropantoate + (6S)-5,6,7,8-tetrahydrofolate. Its pathway is cofactor biosynthesis; (R)-pantothenate biosynthesis; (R)-pantoate from 3-methyl-2-oxobutanoate: step 1/2. Functionally, catalyzes the reversible reaction in which hydroxymethyl group from 5,10-methylenetetrahydrofolate is transferred onto alpha-ketoisovalerate to form ketopantoate. This Methylobacterium sp. (strain 4-46) protein is 3-methyl-2-oxobutanoate hydroxymethyltransferase.